We begin with the raw amino-acid sequence, 166 residues long: Ureidoglycolate lyase (166 aa).

It belongs to the ureidoglycolate lyase family. In terms of assembly, homodimer. Ni(2+) is required as a cofactor.

It catalyses the reaction (S)-ureidoglycolate = urea + glyoxylate. Its pathway is nitrogen metabolism; (S)-allantoin degradation. Its function is as follows. Catalyzes the catabolism of the allantoin degradation intermediate (S)-ureidoglycolate, generating urea and glyoxylate. Involved in the utilization of allantoin as nitrogen source. This is Ureidoglycolate lyase from Rhizobium etli (strain ATCC 51251 / DSM 11541 / JCM 21823 / NBRC 15573 / CFN 42).